A 398-amino-acid polypeptide reads, in one-letter code: Enoyl-[acyl-carrier-protein] reductase [NADH] (398 aa).

NAD(+)-binding positions include 48–53, 74–75, 111–112, and 139–140; these read GASTGY, FE, DA, and LA. Residue Tyr225 participates in substrate binding. Tyr235 (proton donor) is an active-site residue. NAD(+)-binding positions include Lys244 and 273 to 275; that span reads VVT.

Belongs to the TER reductase family. In terms of assembly, monomer.

It catalyses the reaction a 2,3-saturated acyl-[ACP] + NAD(+) = a (2E)-enoyl-[ACP] + NADH + H(+). The protein operates within lipid metabolism; fatty acid biosynthesis. Functionally, involved in the final reduction of the elongation cycle of fatty acid synthesis (FAS II). Catalyzes the reduction of a carbon-carbon double bond in an enoyl moiety that is covalently linked to an acyl carrier protein (ACP). The protein is Enoyl-[acyl-carrier-protein] reductase [NADH] of Paraburkholderia xenovorans (strain LB400).